The following is a 156-amino-acid chain: Small ribosomal subunit protein uS7 (156 aa).

The protein belongs to the universal ribosomal protein uS7 family. Part of the 30S ribosomal subunit. Contacts proteins S9 and S11.

In terms of biological role, one of the primary rRNA binding proteins, it binds directly to 16S rRNA where it nucleates assembly of the head domain of the 30S subunit. Is located at the subunit interface close to the decoding center, probably blocks exit of the E-site tRNA. The polypeptide is Small ribosomal subunit protein uS7 (Klebsiella pneumoniae (strain 342)).